We begin with the raw amino-acid sequence, 419 residues long: L-rhamnose isomerase (419 aa).

Residues H262, D294, and D296 each contribute to the Mn(2+) site.

This sequence belongs to the rhamnose isomerase family. As to quaternary structure, homotetramer. The cofactor is Mn(2+).

It is found in the cytoplasm. The catalysed reaction is L-rhamnopyranose = L-rhamnulose. It participates in carbohydrate degradation; L-rhamnose degradation; glycerone phosphate from L-rhamnose: step 1/3. Catalyzes the interconversion of L-rhamnose and L-rhamnulose. The sequence is that of L-rhamnose isomerase from Salmonella typhimurium (strain LT2 / SGSC1412 / ATCC 700720).